A 166-amino-acid chain; its full sequence is NAD(P)H-quinone oxidoreductase subunit I, chloroplastic (166 aa).

4Fe-4S ferredoxin-type domains follow at residues 55-84 (GRIH…VDWK) and 95-124 (LNYS…MTEE). The [4Fe-4S] cluster site is built by cysteine 64, cysteine 67, cysteine 70, cysteine 74, cysteine 104, cysteine 107, cysteine 110, and cysteine 114.

Belongs to the complex I 23 kDa subunit family. As to quaternary structure, NDH is composed of at least 16 different subunits, 5 of which are encoded in the nucleus. [4Fe-4S] cluster serves as cofactor.

It localises to the plastid. Its subcellular location is the chloroplast thylakoid membrane. The catalysed reaction is a plastoquinone + NADH + (n+1) H(+)(in) = a plastoquinol + NAD(+) + n H(+)(out). It carries out the reaction a plastoquinone + NADPH + (n+1) H(+)(in) = a plastoquinol + NADP(+) + n H(+)(out). NDH shuttles electrons from NAD(P)H:plastoquinone, via FMN and iron-sulfur (Fe-S) centers, to quinones in the photosynthetic chain and possibly in a chloroplast respiratory chain. The immediate electron acceptor for the enzyme in this species is believed to be plastoquinone. Couples the redox reaction to proton translocation, and thus conserves the redox energy in a proton gradient. This is NAD(P)H-quinone oxidoreductase subunit I, chloroplastic from Bahiopsis tomentosa (Tecote).